The following is a 299-amino-acid chain: ATP phosphoribosyltransferase (299 aa).

Belongs to the ATP phosphoribosyltransferase family. Long subfamily. In terms of assembly, equilibrium between an active dimeric form, an inactive hexameric form and higher aggregates. Interconversion between the various forms is largely reversible and is influenced by the natural substrates and inhibitors of the enzyme. It depends on Mg(2+) as a cofactor.

It localises to the cytoplasm. It carries out the reaction 1-(5-phospho-beta-D-ribosyl)-ATP + diphosphate = 5-phospho-alpha-D-ribose 1-diphosphate + ATP. Its pathway is amino-acid biosynthesis; L-histidine biosynthesis; L-histidine from 5-phospho-alpha-D-ribose 1-diphosphate: step 1/9. Its activity is regulated as follows. Feedback inhibited by histidine. Its function is as follows. Catalyzes the condensation of ATP and 5-phosphoribose 1-diphosphate to form N'-(5'-phosphoribosyl)-ATP (PR-ATP). Has a crucial role in the pathway because the rate of histidine biosynthesis seems to be controlled primarily by regulation of HisG enzymatic activity. This is ATP phosphoribosyltransferase from Salmonella choleraesuis (strain SC-B67).